A 184-amino-acid polypeptide reads, in one-letter code: TRAF-interacting protein with FHA domain-containing protein A (184 aa).

The residue at position 9 (threonine 9) is a Phosphothreonine. The FHA domain occupies 47–103 (VKFGRNSNMCQYTFQDKQVSRIQFVLQPFKQFNSSVLSFEIKNMSKKTSLMVDNQEL). The segment at 152-184 (NNWPTQNPIPEDGMYSSYFTHRSSPSEMDENEL) is disordered. Polar residues predominate over residues 168-177 (SYFTHRSSPS).

It belongs to the TIFA family. As to quaternary structure, homooligomer; homooligomerizes following phosphorylation at Thr-9. Interacts with IRAK1, TRAF2 and TRAF6. Interacts with TIFAB; binding to TIFAB inhibits TRAF6 activation, possibly by inducing a conformational change in TIFA. Interacts with ZCCHC11; binding to ZCCHC11 suppresses the TRAF6-dependent activation of NF-kappa-B. In terms of processing, phosphorylated at Thr-9 following detection of ADP-D-glycero-beta-D-manno-heptose (ADP-Heptose) by ALPK1. Phosphorylation at Thr-9 by ALPK1 leads to the formation of an intermolecular binding between the FHA domain and phosphorylated Thr-9, promoting TIFA oligomerization and TIFA-mediated NF-kappa-B activation. In terms of tissue distribution, highly expressed in the spleen and at lower levels in heart, brain, lung, liver, kidney and testes.

The protein localises to the cytoplasm. In terms of biological role, adapter molecule that plays a key role in the activation of pro-inflammatory NF-kappa-B signaling following detection of bacterial pathogen-associated molecular pattern metabolites (PAMPs). Promotes activation of an innate immune response by inducing the oligomerization and polyubiquitination of TRAF6, which leads to the activation of TAK1 and IKK through a proteasome-independent mechanism. TIFA-dependent innate immune response is triggered by ADP-D-glycero-beta-D-manno-heptose (ADP-Heptose), a potent PAMP present in all Gram-negative and some Gram-positive bacteria: ADP-Heptose is recognized by ALPK1, which phosphorylates TIFA at Thr-9, leading to TIFA homooligomerization and subsequent activation of pro-inflammatory NF-kappa-B signaling. This chain is TRAF-interacting protein with FHA domain-containing protein A, found in Mus musculus (Mouse).